A 249-amino-acid polypeptide reads, in one-letter code: Homeobox protein TGIF2LX (249 aa).

Disordered regions lie at residues 1–65 (MEAA…GYSP) and 126–199 (DPIV…PKKK). Basic and acidic residues predominate over residues 9–27 (AETRSRVEKDSRRAIKDSP). Over residues 28-46 (AKTQSPAQDTSIMLRNNAD) the composition is skewed to polar residues. A DNA-binding region (homeobox; TALE-type) is located at residues 55-118 (EHKKKRKGYS…INARRRILPD (64 aa)). The segment covering 159–172 (DNVQSLPLRSSPKG) has biased composition (polar residues).

The protein belongs to the TALE/TGIF homeobox family.

It localises to the nucleus. Its function is as follows. May have a transcription role in testis. The polypeptide is Homeobox protein TGIF2LX (TGIF2LX) (Macaca mulatta (Rhesus macaque)).